The sequence spans 45 residues: Photosystem II reaction center protein K (45 aa).

The propeptide occupies 1-8 (MEAVLLLA). A helical membrane pass occupies residues 24-44 (MPVIPLFFLALAFVWQAAVGF).

This sequence belongs to the PsbK family. As to quaternary structure, PSII is composed of 1 copy each of membrane proteins PsbA, PsbB, PsbC, PsbD, PsbE, PsbF, PsbH, PsbI, PsbJ, PsbK, PsbL, PsbM, PsbT, PsbX, PsbY, PsbZ, Psb30/Ycf12, peripheral proteins PsbO, CyanoQ (PsbQ), PsbU, PsbV and a large number of cofactors. It forms dimeric complexes.

It localises to the cellular thylakoid membrane. One of the components of the core complex of photosystem II (PSII). PSII is a light-driven water:plastoquinone oxidoreductase that uses light energy to abstract electrons from H(2)O, generating O(2) and a proton gradient subsequently used for ATP formation. It consists of a core antenna complex that captures photons, and an electron transfer chain that converts photonic excitation into a charge separation. The protein is Photosystem II reaction center protein K of Acaryochloris marina (strain MBIC 11017).